We begin with the raw amino-acid sequence, 1357 residues long: Vascular endothelial growth factor receptor 3 (1357 aa).

Positions 1-24 (MKRDFTFFCRIWIGIPFFSGLVNG) are cleaved as a signal peptide. Ig-like C2-type domains lie at 25–121 (FSMS…YYRC), 138–244 (IFVF…VQVI), 255–343 (PEDS…RELT), 352–442 (PFIS…LNFT), 453–583 (EKEA…TTIP), 583–690 (PEGF…HRKY), and 699–785 (PRYR…ATVS). Residues 25 to 796 (FSMSPPTLDN…IGSDDKTNVE (772 aa)) are Extracellular-facing. N-linked (GlcNAc...) asparagine glycosylation is found at Asn44, Asn48, Asn114, Asn216, and Asn271. Cystine bridges form between Cys51–Cys121 and Cys173–Cys225. An intrachain disulfide couples Cys272 to Cys331. N-linked (GlcNAc...) asparagine glycans are attached at residues Asn360, Asn400, and Asn440. 3 cysteine pairs are disulfide-bonded: Cys473–Cys562, Cys493–Cys514, and Cys606–Cys674. N-linked (GlcNAc...) asparagine glycans are attached at residues Asn553, Asn610, Asn660, Asn707, Asn711, and Asn751. Cys720 and Cys772 are disulfide-bonded. A helical transmembrane segment spans residues 797–817 (IVILIGTGVIAIFFWVLLLVI). At 818 to 1357 (FCNVKRVNPA…DYFSSSDQAV (540 aa)) the chain is on the cytoplasmic side. A Protein kinase domain is found at 866–1181 (LRLGKVLGHG…ALVEILGDLL (316 aa)). ATP is bound by residues 872–880 (LGHGAFGKV) and Lys900. The segment at 978–1007 (QSQVRRMIEAGQASQSEHQPSTSSTNPPRV) is disordered. The segment covering 989–1005 (QASQSEHQPSTSSTNPP) has biased composition (polar residues). Asp1045 functions as the Proton acceptor in the catalytic mechanism. 2 positions are modified to phosphotyrosine; by autocatalysis: Tyr1071 and Tyr1076. Positions 1192-1212 (NVSQSSEDDGFSQASSRPPSQ) are disordered. A phosphotyrosine; by autocatalysis mark is found at Tyr1226, Tyr1227, Tyr1334, and Tyr1338.

This sequence belongs to the protein kinase superfamily. Tyr protein kinase family. CSF-1/PDGF receptor subfamily. As to quaternary structure, interacts with vegfc and vegfd. Monomer in the absence of bound vegfc or vegfd. Homodimer in the presence of bound vegfc or vegfd. In terms of processing, autophosphorylated on tyrosine residues upon ligand binding. Autophosphorylation occurs in trans, i.e. one subunit of the dimeric receptor phosphorylates tyrosine residues on the other subunit.

Its subcellular location is the cell membrane. The protein localises to the cytoplasm. It is found in the nucleus. It carries out the reaction L-tyrosyl-[protein] + ATP = O-phospho-L-tyrosyl-[protein] + ADP + H(+). Present in an inactive conformation in the absence of bound ligand. Binding of vegfc or vegfd leads to dimerization and activation by autophosphorylation on tyrosine residues. In terms of biological role, tyrosine-protein kinase that acts as a cell-surface receptor for vegf or vegfc. Combinations of multiple VEGF receptors are required for development of different blood vessel types in the embryo. Involved in angiogenesis, specifically in VEGF-induced sprouting of new blood vessels, but not required for proper vasculogenesis or hematopoiesis. The polypeptide is Vascular endothelial growth factor receptor 3 (flt4) (Danio rerio (Zebrafish)).